The sequence spans 440 residues: GTPase Der (440 aa).

EngA-type G domains follow at residues Ala5–Glu167 and Ile178–Ser353. GTP contacts are provided by residues Gly11–Ser18, Asp58–Ile62, Asn120–Glu123, Gly184–Ser191, Asp231–Leu235, and Asn296–Asp299. The region spanning Lys354 to Gln438 is the KH-like domain.

It belongs to the TRAFAC class TrmE-Era-EngA-EngB-Septin-like GTPase superfamily. EngA (Der) GTPase family. Associates with the 50S ribosomal subunit.

Functionally, GTPase that plays an essential role in the late steps of ribosome biogenesis. The sequence is that of GTPase Der from Natranaerobius thermophilus (strain ATCC BAA-1301 / DSM 18059 / JW/NM-WN-LF).